The chain runs to 216 residues: MESQEPTESSQNGKQYIISEELISEGKWVKLEKTTYMDPTGKTRTWESVKRTTRKEQTADGVAVIPVLQRTLHYECIVLVKQFRPPMGGYCIEFPAGLIDDGETPEAAALRELEEETGYKGDVAECSPAVCMDPGLSNCTVHIVTVTINGDDAENARPKPKPEFVEVISLPKNDLLQRLDALVAEEHLTVDARVYSYALALKHANAKPFEVPFLKF.

At Met1 the chain carries N-acetylmethionine. 2 positions are modified to phosphoserine: Ser3 and Ser10. Trp28 contacts substrate. Lys42 participates in a covalent cross-link: Glycyl lysine isopeptide (Lys-Gly) (interchain with G-Cter in SUMO2). Thr45 carries the phosphothreonine modification. Substrate-binding positions include 46–47 (WE) and Arg51. The 138-residue stretch at 57–194 (QTADGVAVIP…EEHLTVDARV (138 aa)) folds into the Nudix hydrolase domain. Tyr74 carries the phosphotyrosine modification. Arg84 contacts substrate. Ala96 provides a ligand contact to Mg(2+). A Nudix box motif is present at residues 97–118 (GLIDDGETPEAAALRELEEETG). Leu98 is a binding site for substrate. Mg(2+) is bound by residues Glu112 and Glu116. Asp133 is a substrate binding site. Glu163 contributes to the Mg(2+) binding site. N6-acetyllysine is present on residues Lys207 and Lys215.

This sequence belongs to the Nudix hydrolase family. As to quaternary structure, homodimer. Interacts with PARG. Requires Mg(2+) as cofactor. Post-translationally, phosphorylation at Thr-45 is required for homodimer stability; dephosphorylation results in destabilization of the homodimer. Dephosphorylation at Thr-45 promotes the ATP-synthesis activity.

It is found in the nucleus. It catalyses the reaction D-ribose 5-phosphate + ATP + H(+) = ADP-D-ribose + diphosphate. The enzyme catalyses ADP-D-ribose + H2O = D-ribose 5-phosphate + AMP + 2 H(+). The catalysed reaction is 8-oxo-dGDP + H2O = 8-oxo-dGMP + phosphate + H(+). Enzyme that can either act as an ADP-sugar pyrophosphatase in absence of diphosphate or catalyze the synthesis of ATP in presence of diphosphate. In absence of diphosphate, hydrolyzes with similar activities various modified nucleoside diphosphates such as ADP-ribose, ADP-mannose, ADP-glucose, 8-oxo-GDP and 8-oxo-dGDP. Can also hydrolyze other nucleotide sugars with low activity. In presence of diphosphate, mediates the synthesis of ATP in the nucleus by catalyzing the conversion of ADP-ribose to ATP and ribose 5-phosphate. Nuclear ATP synthesis takes place when dephosphorylated at Thr-45. Nuclear ATP generation is required for extensive chromatin remodeling events that are energy-consuming. Does not play a role in U8 snoRNA decapping activity. Binds U8 snoRNA. This Pongo abelii (Sumatran orangutan) protein is ADP-sugar pyrophosphatase.